We begin with the raw amino-acid sequence, 112 residues long: Large ribosomal subunit protein uL1 (112 aa).

The protein belongs to the universal ribosomal protein uL1 family.

In Caenorhabditis remanei (Caenorhabditis vulgaris), this protein is Large ribosomal subunit protein uL1 (rpl-10a).